Reading from the N-terminus, the 134-residue chain is Small ribosomal subunit protein uS9 (134 aa).

The tract at residues 109-134 is disordered; that stretch reads DARRTEPHKPSKSSKGPRAKRQKSYR. The span at 118–134 shows a compositional bias: basic residues; sequence PSKSSKGPRAKRQKSYR.

This sequence belongs to the universal ribosomal protein uS9 family.

This Methanococcus maripaludis (strain DSM 14266 / JCM 13030 / NBRC 101832 / S2 / LL) protein is Small ribosomal subunit protein uS9.